The following is a 627-amino-acid chain: (-)-alpha-pinene synthase 1, chloroplastic (627 aa).

The transit peptide at Met1 to Leu36 directs the protein to the chloroplast. Positions 378, 382, and 530 each coordinate Mg(2+). The short motif at Asp378–Asp382 is the DDXXD motif element.

The protein belongs to the terpene synthase family. Tpsd subfamily. Mg(2+) is required as a cofactor. Requires Mn(2+) as cofactor.

Its subcellular location is the plastid. It localises to the chloroplast. The enzyme catalyses (2E)-geranyl diphosphate = (1S,5S)-beta-pinene + diphosphate. It catalyses the reaction (2E)-geranyl diphosphate = (1S,5S)-alpha-pinene + diphosphate. Its pathway is terpene metabolism; oleoresin biosynthesis. Its function is as follows. Terpene synthase (TPS) involved in the biosynthesis of monoterpene natural products included in conifer oleoresin secretions and volatile emissions; these compounds contribute to biotic and abiotic stress defense against herbivores and pathogens. Catalyzes the conversion of (2E)-geranyl diphosphate (GPP) to (1S,5S)-beta-pinene. This is (-)-alpha-pinene synthase 1, chloroplastic from Picea sitchensis (Sitka spruce).